The primary structure comprises 466 residues: Myocardial zonula adherens protein (466 aa).

Residues Met-1–Leu-10 are compositionally biased toward polar residues. A signal peptide spans Met-1 to Gly-20. The interval Met-1–Ser-23 is disordered. 2 coiled-coil regions span residues Gln-96 to Gln-142 and Leu-174 to Lys-418. The short motif at Arg-424–Glu-425 is the Required for DYNLL1-binding element.

The protein belongs to the MYZAP family. In terms of assembly, interacts with DSP, MPRIP and TJP1/ZO1. Interaction with MPRIP inhibits the activation of transcription factor SRF. Interacts with GRIN1. Interacts with DYNLL1. In terms of tissue distribution, detected in heart, liver, skeletal muscle, placenta, small intestine, lung, prostate and testis. Expressed in arrector pili muscle (at protein level).

It localises to the cytoplasm. The protein localises to the cytoskeleton. The protein resides in the cell membrane. It is found in the myofibril. Its subcellular location is the sarcomere. It localises to the i band. The protein localises to the z line. The protein resides in the cell junction. Its function is as follows. Plays a role in cellular signaling via Rho-related GTP-binding proteins and subsequent activation of transcription factor SRF. Targets TJP1 to cell junctions. In cortical neurons, may play a role in glutaminergic signal transduction through interaction with the NMDA receptor subunit GRIN1. The polypeptide is Myocardial zonula adherens protein (MYZAP) (Homo sapiens (Human)).